Consider the following 666-residue polypeptide: Endogenous retrovirus group K member 19 Gag polyprotein (666 aa).

Gly-2 is lipidated: N-myristoyl glycine. 2 disordered regions span residues 170 to 189 and 223 to 264; these read LVGPSESKPRGTSRLPAGQV and PLES…GSEL. Residues 232–247 are compositionally biased toward pro residues; that stretch reads GMPPAPQGRAPYPQPP. 2 CCHC-type zinc fingers span residues 544 to 561 and 580 to 597; these read GKCYNCGQIGHLKKNCPV and DLCPRCKKGKHWASQCRS. Residues 598–640 are disordered; that stretch reads KFDKNGQPLSGNEQRGQPQAPQQTGAFPIQPFVPHGFQGQQPP. Residues 604-622 are compositionally biased toward polar residues; that stretch reads QPLSGNEQRGQPQAPQQTG.

The protein belongs to the beta type-B retroviral Gag protein family. HERV class-II K(HML-2) gag subfamily. Post-translationally, myristoylation is essential for retroviral assembly. Alteration of the glycine residue leads to a block in the budding of particles and an accumulation of Gag inside the cell. Specific enzymatic cleavages may yield mature proteins.

The protein resides in the cell membrane. Functionally, the products of the Gag polyproteins of infectious retroviruses perform highly complex orchestrated tasks during the assembly, budding, maturation, and infection stages of the viral replication cycle. During viral assembly, the proteins form membrane associations and self-associations that ultimately result in budding of an immature virion from the infected cell. Gag precursors also function during viral assembly to selectively bind and package two plus strands of genomic RNA. Endogenous Gag proteins may have kept, lost or modified their original function during evolution. The sequence is that of Endogenous retrovirus group K member 19 Gag polyprotein (ERVK-19) from Homo sapiens (Human).